We begin with the raw amino-acid sequence, 560 residues long: Membrane protein insertase YidC (560 aa).

The chain crosses the membrane as a helical span at residues 1-21 (MDIKRTILIAALAVVSYVMVL). Positions 42–66 (VAPGLPDGVPAGNNGASADVPSANA) are disordered. The next 5 helical transmembrane spans lie at 341–361 (LELT…FWLL), 367–387 (LLGN…GLFF), 437–457 (LGGC…YWVL), 468–488 (WILW…PIIM), and 515–535 (PIIF…YWVV).

Belongs to the OXA1/ALB3/YidC family. Type 1 subfamily. In terms of assembly, interacts with the Sec translocase complex via SecD. Specifically interacts with transmembrane segments of nascent integral membrane proteins during membrane integration.

It is found in the cell inner membrane. Required for the insertion and/or proper folding and/or complex formation of integral membrane proteins into the membrane. Involved in integration of membrane proteins that insert both dependently and independently of the Sec translocase complex, as well as at least some lipoproteins. Aids folding of multispanning membrane proteins. The protein is Membrane protein insertase YidC of Pseudomonas putida (strain ATCC 47054 / DSM 6125 / CFBP 8728 / NCIMB 11950 / KT2440).